Here is a 558-residue protein sequence, read N- to C-terminus: MNIDVVLLLEQNPILLIFVVLAIGLSFGKIRFGSFQLGNSIGVLITSLIMGHLGFSFTPEALTIGFMLFIYCVGIEAGPNFFGIFFRDGKHYLILSLVVLITATWIAYFGGYYLNLDYGLAAGMMAGALTSTPVLVGAQDALNSGLAAVPRHMDLSLILDNVSVGYAMAYLIGLISMIMFAKLLPKLQKQNLSDSAQQIAQERGLGSQRKVYLPIIRAYRVGPELINWIDGRNLRELGIYRQTGCYIERIRRHGILAHPDGDAILQEGDEIALVGFPDSHARLDPSFRNGKEVFDRNLLDLRISEEEIVVKSDSIAGKRLSDLNLSEYGCFLNRVVRAQIEMPMDLDIVLAKGDVLQVSGEKSKVKGLADKIGFISVHSQMADLLAFCSFFILGILFGLVTMTFGQVSFSLGNAVGLLLSGITLGFLRANHPTFGYVPQGALNMVKDLGLAIFMVGIGLNAGSKMFQHLSEVGVQVIGLAFLVSVVPVVFAYLVGAYILKMNRALLFGAIIGARTCAPAMDVVNEYAKSTIPALGYAGTYAIANILMTLTGTIFILLS.

5 consecutive transmembrane segments (helical) span residues 5-25 (VVLLLEQNPILLIFVVLAIGL), 37-57 (LGNSIGVLITSLIMGHLGFSF), 66-86 (FMLFIYCVGIEAGPNFFGIFF), 92-112 (YLILSLVVLITATWIAYFGGY), and 164-184 (VGYAMAYLIGLISMIMFAKLL). 2 consecutive RCK C-terminal domains span residues 203–290 (RGLG…FRNG) and 291–374 (KEVF…KIGF). The next 6 helical transmembrane spans lie at 384–404 (LLAFCSFFILGILFGLVTMTF), 407–427 (VSFSLGNAVGLLLSGITLGFL), 441–461 (ALNMVKDLGLAIFMVGIGLNA), 476–496 (VIGLAFLVSVVPVVFAYLVGA), 504–524 (ALLFGAIIGARTCAPAMDVVN), and 537–557 (AGTYAIANILMTLTGTIFILL).

The protein belongs to the AAE transporter (TC 2.A.81) family. YbjL subfamily.

The protein resides in the cell membrane. The sequence is that of Putative transport protein VC0395_A0715/VC395_1212 from Vibrio cholerae serotype O1 (strain ATCC 39541 / Classical Ogawa 395 / O395).